A 472-amino-acid chain; its full sequence is Methanethiol oxidase (472 aa).

Belongs to the selenium-binding protein family.

It is found in the nucleus. The protein resides in the cytoplasm. It localises to the cytosol. The protein localises to the membrane. The catalysed reaction is methanethiol + O2 + H2O = hydrogen sulfide + formaldehyde + H2O2 + H(+). It functions in the pathway organosulfur degradation. In terms of biological role, catalyzes the oxidation of methanethiol, an organosulfur compound known to be produced in substantial amounts by gut bacteria. Selenium-binding protein which may be involved in the sensing of reactive xenobiotics in the cytoplasm. May be involved in intra-Golgi protein transport. In Xenopus laevis (African clawed frog), this protein is Methanethiol oxidase (selenbp1-a).